Reading from the N-terminus, the 65-residue chain is Large ribosomal subunit protein uL30 (65 aa).

This sequence belongs to the universal ribosomal protein uL30 family. Part of the 50S ribosomal subunit.

This is Large ribosomal subunit protein uL30 from Methylobacillus flagellatus (strain ATCC 51484 / DSM 6875 / VKM B-1610 / KT).